The sequence spans 428 residues: UPF0229 protein YeaH (428 aa).

Basic and acidic residues predominate over residues 78-90; the sequence is GNDHFIQNDRIER. The segment at 78-111 is disordered; that stretch reads GNDHFIQNDRIERPQGGGGGGSGSGQGQASQDGE. The span at 92–103 shows a compositional bias: gly residues; that stretch reads QGGGGGGSGSGQ.

Belongs to the UPF0229 family.

This Salmonella choleraesuis (strain SC-B67) protein is UPF0229 protein YeaH.